Reading from the N-terminus, the 168-residue chain is Ribosome maturation factor RimP (168 aa).

This sequence belongs to the RimP family.

It localises to the cytoplasm. In terms of biological role, required for maturation of 30S ribosomal subunits. This Syntrophobacter fumaroxidans (strain DSM 10017 / MPOB) protein is Ribosome maturation factor RimP.